A 394-amino-acid chain; its full sequence is Growth-regulating factor 4 (394 aa).

The 36-residue stretch at 64–99 (PFTAAQYEELEQQALIYKYLVAGVPVPPDLVLPIRR) folds into the QLQ domain. One can recognise a WRC domain in the interval 125–169 (DPEPGRCRRTDGKKWRCSKEAAPDSKYCERHMHRGRNRSRKPVET). 2 short sequence motifs (bipartite nuclear localization signal) span residues 130-140 (RCRRTDGKKWR) and 158-165 (RGRNRSRK). The segment at 156–180 (MHRGRNRSRKPVETQLVAQSQPPSS) is disordered. A compositionally biased stretch (low complexity) spans 170 to 180 (QLVAQSQPPSS).

Belongs to the GRF family. Interacts with GIF1. Interacts with GSK2. As to expression, expressed in stems. Expressed in panicles.

The protein resides in the nucleus. With respect to regulation, transactivation activity is repressed by GSK2. Functionally, transcription activator that plays a role in the regulation of meristematic function in leaves, stems and inflorescences. Transcription activator that plays a regulatory role in grain development. Positively regulates grain size by promoting cell division and expansion, leading to increased grain length and width. Positively regulates the expression of genes promoting cell proliferation. Activates the expression of expansin genes to promote cell expansion and grain size. May promote grain size by activating brassinosteroid responses. Component of a network formed by the microRNA396 (miRNA396), the GRFs and their interacting factors (GIFs) acting in the regulation of meristem function, at least partially through the control of cell proliferation. Component of the miRNA396c-GRF4-GIF1 regulatory module that plays an important role in grain size determination. The polypeptide is Growth-regulating factor 4 (Oryza sativa subsp. japonica (Rice)).